We begin with the raw amino-acid sequence, 654 residues long: Beta-galactosidase-1-like protein (654 aa).

The N-terminal stretch at 1 to 27 is a signal peptide; sequence MAPKKPSCLRSLLLPLSLTLLLPQADT. The N-linked (GlcNAc...) asparagine glycan is linked to asparagine 97. The active-site Proton donor is the glutamate 186. The N-linked (GlcNAc...) asparagine glycan is linked to asparagine 243. Glutamate 264 serves as the catalytic Nucleophile.

It belongs to the glycosyl hydrolase 35 family.

The protein resides in the secreted. Probable glycosyl hydrolase. This is Beta-galactosidase-1-like protein (GLB1L) from Macaca fascicularis (Crab-eating macaque).